Here is a 514-residue protein sequence, read N- to C-terminus: Light-independent protochlorophyllide reductase subunit B (514 aa).

Aspartate 36 is a [4Fe-4S] cluster binding site. Residue aspartate 300 is the Proton donor of the active site. Residue 435–436 (GM) coordinates substrate.

Belongs to the ChlB/BchB/BchZ family. As to quaternary structure, protochlorophyllide reductase is composed of three subunits; ChlL, ChlN and ChlB. Forms a heterotetramer of two ChlB and two ChlN subunits. The cofactor is [4Fe-4S] cluster.

It is found in the plastid. It localises to the chloroplast. The catalysed reaction is chlorophyllide a + oxidized 2[4Fe-4S]-[ferredoxin] + 2 ADP + 2 phosphate = protochlorophyllide a + reduced 2[4Fe-4S]-[ferredoxin] + 2 ATP + 2 H2O. Its pathway is porphyrin-containing compound metabolism; chlorophyll biosynthesis (light-independent). In terms of biological role, component of the dark-operative protochlorophyllide reductase (DPOR) that uses Mg-ATP and reduced ferredoxin to reduce ring D of protochlorophyllide (Pchlide) to form chlorophyllide a (Chlide). This reaction is light-independent. The NB-protein (ChlN-ChlB) is the catalytic component of the complex. In Pleurastrum terricola (Filamentous green alga), this protein is Light-independent protochlorophyllide reductase subunit B.